We begin with the raw amino-acid sequence, 155 residues long: HTH-type transcriptional repressor MdtR (155 aa).

Residues 4–140 form the HTH marR-type domain; that stretch reads ADQLMSDIQL…AAHITAKLAQ (137 aa). A DNA-binding region (H-T-H motif) is located at residues 54–77; sequence VSEIAERMEVKPSAVTLMADRLEQ.

Homodimer.

The protein localises to the cytoplasm. With respect to regulation, the binding of MdtR to the mdtRP promoter region is severely inhibited by adding excess concentrations of fusidic acid or novobiocin but not by actinomycin or streptomycin. Functionally, repressor of the multidrug resistance operon mdtRP. Acts by binding directly to the mdtRP promoter region, leading to the repression of its expression. The chain is HTH-type transcriptional repressor MdtR from Bacillus subtilis (strain 168).